We begin with the raw amino-acid sequence, 694 residues long: Elongation factor G (694 aa).

Residues 8 to 287 (EDYRNFGIMA…AVISYLPSPV (280 aa)) form the tr-type G domain. Residues 17-24 (AHIDAGKT), 86-90 (DTPGH), and 140-143 (NKMD) contribute to the GTP site.

Belongs to the TRAFAC class translation factor GTPase superfamily. Classic translation factor GTPase family. EF-G/EF-2 subfamily.

The protein resides in the cytoplasm. In terms of biological role, catalyzes the GTP-dependent ribosomal translocation step during translation elongation. During this step, the ribosome changes from the pre-translocational (PRE) to the post-translocational (POST) state as the newly formed A-site-bound peptidyl-tRNA and P-site-bound deacylated tRNA move to the P and E sites, respectively. Catalyzes the coordinated movement of the two tRNA molecules, the mRNA and conformational changes in the ribosome. The protein is Elongation factor G of Bartonella quintana (strain Toulouse) (Rochalimaea quintana).